The chain runs to 144 residues: Large ribosomal subunit protein uL15 (144 aa).

The disordered stretch occupies residues 1 to 52 (MYLNTISPMKKSNHSSKRKGRGIGSGKGKTSGRGHKGQRSRSGGKVRRGFEG). Composition is skewed to basic residues over residues 11-21 (KSNHSSKRKGR) and 30-47 (TSGR…GKVR).

Belongs to the universal ribosomal protein uL15 family. As to quaternary structure, part of the 50S ribosomal subunit.

Its function is as follows. Binds to the 23S rRNA. This Wigglesworthia glossinidia brevipalpis protein is Large ribosomal subunit protein uL15.